Consider the following 583-residue polypeptide: Protein cps3 (583 aa).

C3H1-type zinc fingers lie at residues 35–62 and 64–91; these read SLQH…HDLE and ATEK…HVLP. Disordered regions lie at residues 318–346, 471–490, and 504–532; these read LGRP…NGST, KVSS…YNGT, and RQES…KNLG. Polar residues-rich tracts occupy residues 323 to 334, 475 to 490, and 513 to 532; these read KSPSVPTSVGSN, NLNS…YNGT, and PSLN…KNLG.

It localises to the cytoplasm. In terms of biological role, responsible for supersensitivity to the spindle poison, isopropyl N-3-chlorophenyl carbamate. Has a role in meiosis. This chain is Protein cps3 (cps3), found in Schizosaccharomyces pombe (strain 972 / ATCC 24843) (Fission yeast).